We begin with the raw amino-acid sequence, 153 residues long: Interleukin-4 (153 aa).

Residues 1–24 form the signal peptide; the sequence is MGLTSQLLPPLFFLLACAGNFAHG. 3 cysteine pairs are disulfide-bonded: cysteine 27/cysteine 151, cysteine 48/cysteine 89, and cysteine 70/cysteine 123. A glycan (N-linked (GlcNAc...) asparagine) is linked at asparagine 62.

Belongs to the IL-4/IL-13 family.

It is found in the secreted. Functionally, participates in at least several B-cell activation processes as well as of other cell types. It is a costimulator of DNA-synthesis. It induces the expression of class II MHC molecules on resting B-cells. It enhances both secretion and cell surface expression of IgE and IgG1. It also regulates the expression of the low affinity Fc receptor for IgE (CD23) on both lymphocytes and monocytes. Positively regulates IL31RA expression in macrophages. Stimulates autophagy in dendritic cells by interfering with mTORC1 signaling and through the induction of RUFY4. The sequence is that of Interleukin-4 (IL4) from Cercocebus atys (Sooty mangabey).